We begin with the raw amino-acid sequence, 687 residues long: POZ (BTB) and AT hook-containing zinc finger 1 (687 aa).

Positions 41–130 (CDVLLRVGDE…AYTSRIVVRL (90 aa)) constitute a BTB domain. A compositionally biased stretch (polar residues) spans 250 to 260 (PFPNVASSAPP). The tract at residues 250–279 (PFPNVASSAPPLTSKRGRGRPRKANLLDSM) is disordered. A C2H2-type 1 zinc finger spans residues 292–314 (LPCGLCGKVFTDANRLRQHEAQH). The interval 332–351 (GENGLPISEDPDGPRKRSRT) is disordered. 5 C2H2-type zinc fingers span residues 355–377 (VACEICGKIFRDVYHLNRHKLSH), 383–405 (YSCPVCGLRFKRKDRMSYHVRSH), 413–436 (YICQSCGKGFSRPDHLNGHIKQVH), 442–464 (HKCQTCNASFATRDRLRSHLACH), and 495–517 (NFCSICNRGFSSASYLKVHVKTH). Positions 564–587 (SYGDLSDASDLKTPEKQSANGSFS) are disordered. A C2H2-type 7 zinc finger spans residues 605-628 (YPCPECGSFFRSKSYLNKHIQKVH).

Homodimer. Interacts with RNF4. Interacts (via C-terminus) with TP53; this interaction inhibits TP53 ability to activate transcription. Widely expressed at high levels during embryogenesis, especially in the central nervous system, especially to the actively proliferating neuroblasts in the periventricular neocortical neuroepithelium, in the telencephalic cortical plate and in the hippocampus. Also expressed in a stage-specific manner in the mouse germinal epithelium. While strongly expressed during brain development,m its expression turns down in adult brain.

The protein localises to the nucleus. Its function is as follows. Transcriptional regulator that plays a role in many biological processes such as embryogenesis, senescence, T-cell development or neurogenesis. Interacts with the TP53 protein to control genes that are important in proliferation and in the DNA-damage response. Mechanistically, the interaction inhibits the DNA binding and transcriptional activity of TP53/p53. Part of the transcriptional network modulating regulatory T-cell development and controls the generation of the regulatory T-cell pool under homeostatic conditions. The protein is POZ (BTB) and AT hook-containing zinc finger 1 of Mus musculus (Mouse).